Reading from the N-terminus, the 291-residue chain is 33 kDa chaperonin (291 aa).

Cystine bridges form between cysteine 237–cysteine 239 and cysteine 270–cysteine 273.

The protein belongs to the HSP33 family. Under oxidizing conditions two disulfide bonds are formed involving the reactive cysteines. Under reducing conditions zinc is bound to the reactive cysteines and the protein is inactive.

The protein resides in the cytoplasm. Its function is as follows. Redox regulated molecular chaperone. Protects both thermally unfolding and oxidatively damaged proteins from irreversible aggregation. Plays an important role in the bacterial defense system toward oxidative stress. This Clostridioides difficile (strain 630) (Peptoclostridium difficile) protein is 33 kDa chaperonin.